A 476-amino-acid polypeptide reads, in one-letter code: Glycogen synthase (476 aa).

ADP-alpha-D-glucose is bound at residue Lys15.

The protein belongs to the glycosyltransferase 1 family. Bacterial/plant glycogen synthase subfamily.

The enzyme catalyses [(1-&gt;4)-alpha-D-glucosyl](n) + ADP-alpha-D-glucose = [(1-&gt;4)-alpha-D-glucosyl](n+1) + ADP + H(+). Its pathway is glycan biosynthesis; glycogen biosynthesis. Functionally, synthesizes alpha-1,4-glucan chains using ADP-glucose. This chain is Glycogen synthase (glgA), found in Haemophilus influenzae (strain ATCC 51907 / DSM 11121 / KW20 / Rd).